The chain runs to 573 residues: Membrane protein insertase YidC (573 aa).

6 consecutive transmembrane segments (helical) span residues 6 to 26, 355 to 375, 379 to 399, 446 to 466, 488 to 508, and 524 to 544; these read VFLI…WGKD, FSIM…LHSF, WGWA…PLSA, GGCL…WVLV, PYFI…KLTP, and PLVF…YWVV.

The protein belongs to the OXA1/ALB3/YidC family. Type 1 subfamily. As to quaternary structure, interacts with the Sec translocase complex via SecD. Specifically interacts with transmembrane segments of nascent integral membrane proteins during membrane integration.

It is found in the cell inner membrane. Functionally, required for the insertion and/or proper folding and/or complex formation of integral membrane proteins into the membrane. Involved in integration of membrane proteins that insert both dependently and independently of the Sec translocase complex, as well as at least some lipoproteins. Aids folding of multispanning membrane proteins. The chain is Membrane protein insertase YidC from Xanthomonas campestris pv. campestris (strain ATCC 33913 / DSM 3586 / NCPPB 528 / LMG 568 / P 25).